A 268-amino-acid polypeptide reads, in one-letter code: Tryptophan synthase alpha chain (268 aa).

Catalysis depends on proton acceptor residues glutamate 47 and aspartate 58.

This sequence belongs to the TrpA family. Tetramer of two alpha and two beta chains.

It is found in the plastid. The protein localises to the chloroplast. It carries out the reaction (1S,2R)-1-C-(indol-3-yl)glycerol 3-phosphate + L-serine = D-glyceraldehyde 3-phosphate + L-tryptophan + H2O. The protein operates within amino-acid biosynthesis; L-tryptophan biosynthesis; L-tryptophan from chorismate: step 5/5. The alpha subunit is responsible for the aldol cleavage of indoleglycerol phosphate to indole and glyceraldehyde 3-phosphate. The polypeptide is Tryptophan synthase alpha chain (Gracilaria tenuistipitata var. liui (Red alga)).